Reading from the N-terminus, the 864-residue chain is Mitochondrial 15S rRNA processing factor CCM1 (864 aa).

The N-terminal 76 residues, 1–76, are a transit peptide targeting the mitochondrion; it reads MYMARCGPKN…REFSNTLKER (76 aa). Composition is skewed to polar residues over residues 80–94 and 102–112; these read TKSV…NSIA and NVNVTKTSSVP. The tract at residues 80–117 is disordered; sequence TKSVNSDGHQSNSIAPISEDSRNVNVTKTSSVPNEEKS. 2 PPR repeats span residues 319 to 353 and 356 to 390; these read NKQN…STKH and DICT…NIKP.

It belongs to the CCM1 family. In terms of assembly, binds to mitochondrial small subunit 15S rRNA.

It is found in the mitochondrion. In terms of biological role, regulates mitochondrial small subunit maturation by controlling 15S rRNA 5'-end processing. Localizes to the 5' precursor of the 15S rRNA in a position that is subsequently occupied by mS47 in the mature yeast mtSSU. Uses structure and sequence-specific RNA recognition, binding to a single-stranded region of the precursor and specifically recognizing bases -6 to -1. The exchange of Ccm1 for mS47 is coupled to the irreversible removal of precursor rRNA that is accompanied by conformational changes of the mitoribosomal proteins uS5m and mS26. These conformational changes signal completion of 5'-end rRNA processing through protection of the mature 5'-end of the 15S rRNA and stabilization of mS47. The removal of the 5' precursor together with the dissociation of Ccm1 may be catalyzed by the 5'-3' exoribonuclease Pet127. Involved in the specific removal of group I introns in mitochondrial encoded transcripts. This is Mitochondrial 15S rRNA processing factor CCM1 from Saccharomyces cerevisiae (strain ATCC 204508 / S288c) (Baker's yeast).